Consider the following 465-residue polypeptide: MASTTSTKKMMEEATCSICLSLMTNPVSINCGHSYCHLCITDFFKNPSQKQLRQETFCCPQCRAPFHMDSLRPNKQLGSLIEALKETDQEMSCEEHGEQFHLFCEDEGQLICWRCERAPQHKGHTTALVEDVCQGYKEKLQKAVTKLKQLEDRCTEQKLSTAMRITKWKEKVQIQRQKIRSDFKNLQCFLHEEEKSYLWRLEKEEQQTLSRLRDYEAGLGLKSNELKSHILELEEKCQGSAQKLLQNVNDTLSRSWAVKLETSEAVSLELHTMCNVSKLYFDVKKMLRSHQVSVTLDPDTAHHELILSEDRRQVTRGYTQENQDTSSRRFTAFPCVLGCEGFTSGRRYFEVDVGEGTGWDLGVCMENVQRGTGMKQEPQSGFWTLRLCKKKGYVALTSPPTSLHLHEQPLLVGIFLDYEAGVVSFYNGNTGCHIFTFPKASFSDTLRPYFQVYQYSPLFLPPPGD.

The RING-type zinc-finger motif lies at 16-63 (CSICLSLMTNPVSINCGHSYCHLCITDFFKNPSQKQLRQETFCCPQCR). At serine 70 the chain carries Phosphoserine. The B box-type zinc-finger motif lies at 88 to 129 (DQEMSCEEHGEQFHLFCEDEGQLICWRCERAPQHKGHTTALV). Residues cysteine 93, histidine 96, cysteine 115, and histidine 121 each coordinate Zn(2+). Positions 274–465 (CNVSKLYFDV…SPLFLPPPGD (192 aa)) constitute a B30.2/SPRY domain.

In terms of assembly, interacts (via B30.2/SPRY domain) with TAB2 and TAB3. In terms of tissue distribution, ubiquitous.

The protein localises to the cytoplasm. The catalysed reaction is S-ubiquitinyl-[E2 ubiquitin-conjugating enzyme]-L-cysteine + [acceptor protein]-L-lysine = [E2 ubiquitin-conjugating enzyme]-L-cysteine + N(6)-ubiquitinyl-[acceptor protein]-L-lysine.. The protein operates within protein modification; protein ubiquitination. It functions in the pathway protein modification; protein sumoylation. Its function is as follows. E3 ubiquitin-protein and E3 SUMO-protein ligase that acts as a regulator of innate immunity. Acts as a negative regulator of type I interferon IFN-beta production by catalyzing 'Lys-48'-linked polyubiquitination of AZI2/NAP1, leading to its degradation. Mediates 'Lys-48'-linked polyubiquitination and proteasomal degradation of the critical TLR adapter TICAM1, inhibiting TLR3-mediated type I interferon signaling. Acts as positive regulator of the cGAS-STING pathway by acting as a E3 SUMO-protein ligase: mediates sumoylation of CGAS and STING, preventing their degradation and thereby activating the innate immune response to DNA virus. Also acts as a negative regulator of NF-kappa-B signaling independently of its E3 protein ligase activity by promoting lysosome-dependent degradation of TAB2 and TAB3 adapters. The chain is E3 ubiquitin-protein ligase TRIM38 from Homo sapiens (Human).